A 108-amino-acid chain; its full sequence is uncharacterized protein (108 aa).

The tract at residues 1-108 (MAKVTSEPQK…DKEQSETSVL (108 aa)) is disordered. Residues 26–56 (KGRKKGKTPRQRRSRSGVKGLKTTRKAKRPL) are compositionally biased toward basic residues. The span at 58–70 (GSSSQKAGETNTP) shows a compositional bias: polar residues. Over residues 73 to 92 (KPKKARGPILRGRYHRLKEK) the composition is skewed to basic residues. Positions 93 to 108 (MKKEEADKEQSETSVL) are enriched in basic and acidic residues.

This is an uncharacterized protein from Homo sapiens (Human).